The chain runs to 753 residues: Polyribonucleotide nucleotidyltransferase (753 aa).

2 residues coordinate Mg(2+): Asp488 and Asp494. The region spanning 555–614 is the KH domain; it reads PRLLRTKISPDKIGALIGPGGKNIRGIQETTGAVIEVDDEGTVLVASSNKESAQEAMRQV. Residues 624–692 enclose the S1 motif domain; it reads GKIYDGTVSS…EHDRVKLSRR (69 aa). A compositionally biased stretch (acidic residues) spans 698 to 719; that stretch reads LGEEDPLAVEGEGGGDSEGGGD. Residues 698–753 form a disordered region; it reads LGEEDPLAVEGEGGGDSEGGGDGEDRPRRRRGGSGGGGGGGRGRGPRRSGGGRDRD. A compositionally biased stretch (gly residues) spans 730–740; that stretch reads GSGGGGGGGRG.

It belongs to the polyribonucleotide nucleotidyltransferase family. Mg(2+) serves as cofactor.

Its subcellular location is the cytoplasm. It catalyses the reaction RNA(n+1) + phosphate = RNA(n) + a ribonucleoside 5'-diphosphate. Functionally, involved in mRNA degradation. Catalyzes the phosphorolysis of single-stranded polyribonucleotides processively in the 3'- to 5'-direction. This Rhodopirellula baltica (strain DSM 10527 / NCIMB 13988 / SH1) protein is Polyribonucleotide nucleotidyltransferase.